A 669-amino-acid chain; its full sequence is Methionine--tRNA ligase (669 aa).

The 'HIGH' region motif lies at Pro-15 to His-25. 4 residues coordinate Zn(2+): Cys-146, Cys-149, Cys-158, and Cys-162. A 'KMSKS' region motif is present at residues Lys-328–Ser-332. An ATP-binding site is contributed by Lys-331. One can recognise a tRNA-binding domain in the interval Gln-570–Arg-669.

This sequence belongs to the class-I aminoacyl-tRNA synthetase family. MetG type 1 subfamily. As to quaternary structure, homodimer. Requires Zn(2+) as cofactor.

The protein resides in the cytoplasm. The catalysed reaction is tRNA(Met) + L-methionine + ATP = L-methionyl-tRNA(Met) + AMP + diphosphate. Is required not only for elongation of protein synthesis but also for the initiation of all mRNA translation through initiator tRNA(fMet) aminoacylation. This is Methionine--tRNA ligase from Methanothrix thermoacetophila (strain DSM 6194 / JCM 14653 / NBRC 101360 / PT) (Methanosaeta thermophila).